A 1843-amino-acid polypeptide reads, in one-letter code: Xin actin-binding repeat-containing protein 1 (1843 aa).

Positions 1 to 10 (MADTQTQVAP) are enriched in polar residues. The tract at residues 1-48 (MADTQTQVAPTPTMRMATAEDLPLPPPPALEDLPLPPPKESFSKFHQQ) is disordered. Residues 1-54 (MADTQTQVAPTPTMRMATAEDLPLPPPPALEDLPLPPPKESFSKFHQQRQASEL) are interaction with VASP. The span at 23–39 (PLPPPPALEDLPLPPPK) shows a compositional bias: pro residues. 4 Xin repeats span residues 89 to 104 (GDVQ…WRLD), 121 to 136 (GDVQ…GSFA), 151 to 166 (GDVR…KPLD), and 186 to 201 (GDVQ…RPLD). The segment at 132–151 (EGSFANSTDQEPTRPQPGGG) is disordered. Phosphoserine occurs at positions 205, 208, and 213. Xin repeat units follow at residues 226–241 (GDVK…EPLC) and 264–279 (NAVR…RPLD). S295 carries the phosphoserine modification. A Xin 7 repeat occupies 302-317 (PDVSATRWIFETQPLD). Position 332 is a phosphoserine (S332). Xin repeat units lie at residues 340 to 355 (PDVQ…RALD) and 376 to 391 (GDVR…KPLD). The interval 406–432 (DPQDGEGHLSSDSSSALPFSQSAPQRD) is disordered. Over residues 415–429 (SSDSSSALPFSQSAP) the composition is skewed to low complexity. The stretch at 436 to 451 (GDVKTFKNLFETLPLD) is one Xin 10 repeat. Residues 455–479 (QGEVLAHGSPSREEGTDSAGQAQGI) are disordered. Xin repeat units lie at residues 507–522 (GDVQ…QPLD) and 545–560 (GDVG…QPLE). An interaction with CTNNB1 region spans residues 531-632 (IDVVRGITRQ…AQSCTWMFKP (102 aa)). A compositionally biased stretch (basic and acidic residues) spans 564-577 (QREQQERQKEEGKS). The interval 564 to 591 (QREQQERQKEEGKSQGDPQPEAPPKGDV) is disordered. 5 Xin repeats span residues 589 to 604 (GDVQ…CPMS), 621 to 636 (AEAQ…QPVD), 654 to 669 (GERQ…EPLQ), 691 to 706 (GQVS…LEAG), and 723 to 738 (GSVH…CPMG). Disordered stretches follow at residues 943–999 (SLRW…QAIG), 1063–1205 (AEAQ…MAWG), 1238–1277 (SGPQ…HRAE), 1289–1471 (DPLL…QKEL), and 1561–1696 (MSSL…DVSV). Polar residues-rich tracts occupy residues 1064–1073 (EAQSLHQQVL) and 1080–1089 (PTPTATSNPI). The segment covering 1294-1311 (SHSSPAGQRTPGGSQTKT) has biased composition (polar residues). Positions 1357-1368 (GQREHQRGERDT) are enriched in basic and acidic residues. Polar residues predominate over residues 1393-1424 (GHSQPSLQHGLSTTAPRPTKNQATGSNAQSSE). Residues 1462-1490 (DSLQRNQKELQGLLNQVQALEKEAASSVD) adopt a coiled-coil conformation. Polar residues-rich tracts occupy residues 1588–1600 (VTVS…SGSG) and 1663–1679 (SRDS…QSAT). An interaction with FLNC region spans residues 1685-1843 (TPSFKGNPDV…SCSYSQPAAQ (159 aa)).

The protein belongs to the Xin family. In terms of assembly, interacts (via N-terminus) with CTTN; the interaction promotes CTTN localization to intercalated disks in cardiomyocytes. Interacts with CTNNB1. Interacts with FLNC and VASP. Interacts with F-actin. In terms of tissue distribution, expressed in skeletal muscle at areas of Z-disk disruption in a longitudinal pattern spanning one or more sarcomeres (at protein level). As to expression, expressed in the heart (at protein level). Expressed in the heart.

Its subcellular location is the cell junction. It localises to the adherens junction. It is found in the desmosome. Its function is as follows. Protects actin filaments from depolymerization. Required for correct cardiac intercalated disk ultrastructure via maintenance of cell-cell adhesion stability, and as a result maintains cardiac organ morphology, conductance and heart beat rhythm. Required for development of normal skeletal muscle morphology and muscle fiber type composition. Plays a role in regulating muscle satellite cell activation and survival, as a result promotes muscle fiber recovery from injury and fatigue. In Homo sapiens (Human), this protein is Xin actin-binding repeat-containing protein 1.